The following is a 428-amino-acid chain: Enolase (428 aa).

Position 163 (Q163) interacts with (2R)-2-phosphoglycerate. The Proton donor role is filled by E205. Residues D242, E285, and D312 each contribute to the Mg(2+) site. (2R)-2-phosphoglycerate is bound by residues K337, R366, S367, and K388. K337 serves as the catalytic Proton acceptor.

Belongs to the enolase family. Mg(2+) is required as a cofactor.

Its subcellular location is the cytoplasm. It localises to the secreted. It is found in the cell surface. It catalyses the reaction (2R)-2-phosphoglycerate = phosphoenolpyruvate + H2O. It participates in carbohydrate degradation; glycolysis; pyruvate from D-glyceraldehyde 3-phosphate: step 4/5. Functionally, catalyzes the reversible conversion of 2-phosphoglycerate (2-PG) into phosphoenolpyruvate (PEP). It is essential for the degradation of carbohydrates via glycolysis. The sequence is that of Enolase from Neisseria meningitidis serogroup B (strain ATCC BAA-335 / MC58).